The primary structure comprises 119 residues: Large ribosomal subunit protein bL17 (119 aa).

It belongs to the bacterial ribosomal protein bL17 family. In terms of assembly, part of the 50S ribosomal subunit. Contacts protein L32.

The polypeptide is Large ribosomal subunit protein bL17 (Malacoplasma penetrans (strain HF-2) (Mycoplasma penetrans)).